The chain runs to 290 residues: Glutaredoxin domain-containing cysteine-rich protein 1 (290 aa).

A Glutaredoxin domain is found at 127–234; the sequence is LQQPSADLEF…DLLTKIERVQ (108 aa).

It belongs to the GRXCR1 family. In terms of tissue distribution, in the inner ear, expressed predominantly in sensory hair cells and their stereocilia bundles with higher levels in outer hair cells (OHC) at P1 and in inner hair cells (IHC) at P5. At P1, expression is prominent in each row of stereocilia within bundles including immature shorter stereocilia. Expression is also observed in apical microvilli of sensory cells at P1 and in kinocilia at P1 and P5. In the adult, expression is localized throughout the length of the stereocilia of both OHC and IHC (at protein level).

The protein localises to the cell projection. Its subcellular location is the stereocilium. It is found in the microvillus. It localises to the kinocilium. Its function is as follows. May play a role in actin filament architecture in developing stereocilia of sensory cells. In Mus musculus (Mouse), this protein is Glutaredoxin domain-containing cysteine-rich protein 1 (Grxcr1).